A 464-amino-acid polypeptide reads, in one-letter code: Protein FAM90A9 (464 aa).

Disordered regions lie at residues 1 to 42 (MMAR…DPRL), 70 to 389 (PATL…HDGA), and 411 to 437 (APSF…SEAP). Basic and acidic residues-rich tracts occupy residues 74 to 89 (GKKE…KPRV) and 97 to 114 (NKDK…DPQR). Positions 180 to 197 (LASLSPLRKASLSSSSSL) are enriched in low complexity.

Belongs to the FAM90 family.

The chain is Protein FAM90A9 (FAM90A9) from Homo sapiens (Human).